Here is a 330-residue protein sequence, read N- to C-terminus: Calponin-3 (330 aa).

Lys-23 is modified (N6-acetyllysine). In terms of domain architecture, Calponin-homology (CH) spans 26 to 130 (QQAEEDLRNW…TLVALAGLAK (105 aa)). The residue at position 158 (Lys-158) is an N6-methyllysine. Calponin-like repeat units follow at residues 164-189 (IGLQ…RHLY), 204-229 (ISLQ…RDIY), and 243-268 (ISLQ…RQVY). The disordered stretch occupies residues 279 to 330 (PVIHNGSQGTGTNGSEISDSDYQAEYPDEYHGEYPDEYPREYQYGDDQGIDY). The span at 306 to 318 (DEYHGEYPDEYPR) shows a compositional bias: basic and acidic residues.

This sequence belongs to the calponin family.

Functionally, thin filament-associated protein that is implicated in the regulation and modulation of smooth muscle contraction. It is capable of binding to actin, calmodulin and tropomyosin. The interaction of calponin with actin inhibits the actomyosin Mg-ATPase activity. The protein is Calponin-3 (Cnn3) of Rattus norvegicus (Rat).